The chain runs to 231 residues: Urease accessory protein UreF (231 aa).

This sequence belongs to the UreF family. As to quaternary structure, ureD, UreF and UreG form a complex that acts as a GTP-hydrolysis-dependent molecular chaperone, activating the urease apoprotein by helping to assemble the nickel containing metallocenter of UreC. The UreE protein probably delivers the nickel.

It localises to the cytoplasm. In terms of biological role, required for maturation of urease via the functional incorporation of the urease nickel metallocenter. This Marinobacter nauticus (strain ATCC 700491 / DSM 11845 / VT8) (Marinobacter aquaeolei) protein is Urease accessory protein UreF.